Reading from the N-terminus, the 473-residue chain is Ribulose bisphosphate carboxylase large chain 2 (473 aa).

Substrate-binding residues include Asn116 and Thr166. The active-site Proton acceptor is Lys168. Lys170 provides a ligand contact to substrate. Residues Lys194, Asp196, and Glu197 each contribute to the Mg(2+) site. Lys194 carries the post-translational modification N6-carboxylysine. Catalysis depends on His287, which acts as the Proton acceptor. 3 residues coordinate substrate: Arg288, His320, and Ser372.

Belongs to the RuBisCO large chain family. Type I subfamily. Heterohexadecamer of 8 large chains and 8 small chains. Mg(2+) serves as cofactor.

The catalysed reaction is 2 (2R)-3-phosphoglycerate + 2 H(+) = D-ribulose 1,5-bisphosphate + CO2 + H2O. It carries out the reaction D-ribulose 1,5-bisphosphate + O2 = 2-phosphoglycolate + (2R)-3-phosphoglycerate + 2 H(+). Its function is as follows. RuBisCO catalyzes two reactions: the carboxylation of D-ribulose 1,5-bisphosphate, the primary event in carbon dioxide fixation, as well as the oxidative fragmentation of the pentose substrate. Both reactions occur simultaneously and in competition at the same active site. In Acidithiobacillus ferrooxidans (Thiobacillus ferrooxidans), this protein is Ribulose bisphosphate carboxylase large chain 2.